Here is a 207-residue protein sequence, read N- to C-terminus: Large ribosomal subunit protein uL4 (207 aa).

Residues 52–75 (KNRSAVRGGGKKPWRQKGTGRARQ) form a disordered region. A compositionally biased stretch (basic residues) spans 60 to 71 (GGKKPWRQKGTG).

Belongs to the universal ribosomal protein uL4 family. In terms of assembly, part of the 50S ribosomal subunit.

In terms of biological role, one of the primary rRNA binding proteins, this protein initially binds near the 5'-end of the 23S rRNA. It is important during the early stages of 50S assembly. It makes multiple contacts with different domains of the 23S rRNA in the assembled 50S subunit and ribosome. Its function is as follows. Forms part of the polypeptide exit tunnel. This Limosilactobacillus fermentum (strain NBRC 3956 / LMG 18251) (Lactobacillus fermentum) protein is Large ribosomal subunit protein uL4.